The chain runs to 195 residues: dCTP deaminase, dUMP-forming (195 aa).

DCTP contacts are provided by residues 105-110 (RSSLGR), aspartate 123, 131-133 (TLE), glutamine 152, tyrosine 166, lysine 173, and glutamine 177. Glutamate 133 functions as the Proton donor/acceptor in the catalytic mechanism. The interval 161–195 (PADRPYGDERGSKYQDQDGPQASRIRGDREFGGTQ) is disordered. Basic and acidic residues predominate over residues 165–176 (PYGDERGSKYQD). Positions 185-195 (IRGDREFGGTQ) are enriched in basic and acidic residues.

Belongs to the dCTP deaminase family. As to quaternary structure, homotrimer.

It carries out the reaction dCTP + 2 H2O = dUMP + NH4(+) + diphosphate. It participates in pyrimidine metabolism; dUMP biosynthesis; dUMP from dCTP: step 1/1. Its function is as follows. Bifunctional enzyme that catalyzes both the deamination of dCTP to dUTP and the hydrolysis of dUTP to dUMP without releasing the toxic dUTP intermediate. This Halobacterium salinarum (strain ATCC 700922 / JCM 11081 / NRC-1) (Halobacterium halobium) protein is dCTP deaminase, dUMP-forming.